Reading from the N-terminus, the 530-residue chain is Phosphoenolpyruvate carboxykinase (ATP) (530 aa).

Positions 58, 195, and 201 each coordinate substrate. ATP contacts are provided by residues lysine 201, histidine 220, and 236–244 (GLSGTGKTT). Lysine 201 and histidine 220 together coordinate Mn(2+). Mn(2+) is bound at residue aspartate 257. ATP contacts are provided by residues glutamate 285, arginine 321, 440–441 (RI), and threonine 446. A substrate-binding site is contributed by arginine 321.

This sequence belongs to the phosphoenolpyruvate carboxykinase (ATP) family. It depends on Mn(2+) as a cofactor.

It localises to the cytoplasm. The enzyme catalyses oxaloacetate + ATP = phosphoenolpyruvate + ADP + CO2. Its pathway is carbohydrate biosynthesis; gluconeogenesis. In terms of biological role, involved in the gluconeogenesis. Catalyzes the conversion of oxaloacetate (OAA) to phosphoenolpyruvate (PEP) through direct phosphoryl transfer between the nucleoside triphosphate and OAA. The polypeptide is Phosphoenolpyruvate carboxykinase (ATP) (Staphylococcus aureus (strain MRSA252)).